A 188-amino-acid chain; its full sequence is Peptidyl-tRNA hydrolase (188 aa).

Tyr15 provides a ligand contact to tRNA. The active-site Proton acceptor is the His20. TRNA-binding residues include Tyr64, Asn66, and Asn112.

This sequence belongs to the PTH family. As to quaternary structure, monomer.

It localises to the cytoplasm. The catalysed reaction is an N-acyl-L-alpha-aminoacyl-tRNA + H2O = an N-acyl-L-amino acid + a tRNA + H(+). Its function is as follows. Hydrolyzes ribosome-free peptidyl-tRNAs (with 1 or more amino acids incorporated), which drop off the ribosome during protein synthesis, or as a result of ribosome stalling. Catalyzes the release of premature peptidyl moieties from peptidyl-tRNA molecules trapped in stalled 50S ribosomal subunits, and thus maintains levels of free tRNAs and 50S ribosomes. In Cytophaga hutchinsonii (strain ATCC 33406 / DSM 1761 / CIP 103989 / NBRC 15051 / NCIMB 9469 / D465), this protein is Peptidyl-tRNA hydrolase.